Consider the following 194-residue polypeptide: dTTP/UTP pyrophosphatase (194 aa).

The active-site Proton acceptor is the D73.

This sequence belongs to the Maf family. YhdE subfamily. The cofactor is a divalent metal cation.

It is found in the cytoplasm. It carries out the reaction dTTP + H2O = dTMP + diphosphate + H(+). It catalyses the reaction UTP + H2O = UMP + diphosphate + H(+). Its function is as follows. Nucleoside triphosphate pyrophosphatase that hydrolyzes dTTP and UTP. May have a dual role in cell division arrest and in preventing the incorporation of modified nucleotides into cellular nucleic acids. This Clostridium botulinum (strain 657 / Type Ba4) protein is dTTP/UTP pyrophosphatase.